The following is a 23-amino-acid chain: Dahlein-4.2 (23 aa).

As to expression, expressed by the skin dorsal glands.

It localises to the secreted. Functionally, has no antimicrobial activity. In Ranoidea dahlii (Dahl's aquatic frog), this protein is Dahlein-4.2.